The following is a 411-amino-acid chain: Acetylornithine aminotransferase (411 aa).

Pyridoxal 5'-phosphate is bound by residues 107–108 (GT) and Phe-141. Residue Arg-144 coordinates N(2)-acetyl-L-ornithine. 227–230 (DEIQ) contributes to the pyridoxal 5'-phosphate binding site. An N6-(pyridoxal phosphate)lysine modification is found at Lys-256. Residue Thr-284 coordinates N(2)-acetyl-L-ornithine. Thr-285 lines the pyridoxal 5'-phosphate pocket.

This sequence belongs to the class-III pyridoxal-phosphate-dependent aminotransferase family. ArgD subfamily. Homodimer. It depends on pyridoxal 5'-phosphate as a cofactor.

It is found in the cytoplasm. The catalysed reaction is N(2)-acetyl-L-ornithine + 2-oxoglutarate = N-acetyl-L-glutamate 5-semialdehyde + L-glutamate. It functions in the pathway amino-acid biosynthesis; L-arginine biosynthesis; N(2)-acetyl-L-ornithine from L-glutamate: step 4/4. The protein is Acetylornithine aminotransferase of Xylella fastidiosa (strain Temecula1 / ATCC 700964).